Consider the following 269-residue polypeptide: Eukaryotic translation initiation factor 3 subunit G-1 (269 aa).

The RRM domain occupies 188–266 (AAIRISNLSE…LILSVEWSKP (79 aa)).

This sequence belongs to the eIF-3 subunit G family. Component of the eukaryotic translation initiation factor 3 (eIF-3) complex. The eIF-3 complex interacts with pix.

The protein resides in the cytoplasm. Functionally, RNA-binding component of the eukaryotic translation initiation factor 3 (eIF-3) complex, which is involved in protein synthesis of a specialized repertoire of mRNAs and, together with other initiation factors, stimulates binding of mRNA and methionyl-tRNAi to the 40S ribosome. The eIF-3 complex specifically targets and initiates translation of a subset of mRNAs involved in cell proliferation. This subunit can bind 18S rRNA. The protein is Eukaryotic translation initiation factor 3 subunit G-1 of Drosophila persimilis (Fruit fly).